The sequence spans 370 residues: Putative alanine racemase 2 (370 aa).

The active-site Proton acceptor; specific for D-alanine is Lys38. N6-(pyridoxal phosphate)lysine is present on Lys38. Residue Tyr266 is the Proton acceptor; specific for L-alanine of the active site.

This sequence belongs to the alanine racemase family. Pyridoxal 5'-phosphate serves as cofactor.

It carries out the reaction L-alanine = D-alanine. The sequence is that of Putative alanine racemase 2 (alr2) from Schizosaccharomyces pombe (strain 972 / ATCC 24843) (Fission yeast).